The sequence spans 234 residues: 2-C-methyl-D-erythritol 4-phosphate cytidylyltransferase (234 aa).

It belongs to the IspD/TarI cytidylyltransferase family. IspD subfamily.

The enzyme catalyses 2-C-methyl-D-erythritol 4-phosphate + CTP + H(+) = 4-CDP-2-C-methyl-D-erythritol + diphosphate. Its pathway is isoprenoid biosynthesis; isopentenyl diphosphate biosynthesis via DXP pathway; isopentenyl diphosphate from 1-deoxy-D-xylulose 5-phosphate: step 2/6. Functionally, catalyzes the formation of 4-diphosphocytidyl-2-C-methyl-D-erythritol from CTP and 2-C-methyl-D-erythritol 4-phosphate (MEP). The chain is 2-C-methyl-D-erythritol 4-phosphate cytidylyltransferase from Shewanella sediminis (strain HAW-EB3).